The chain runs to 287 residues: 2-dehydro-3-deoxyphosphooctonate aldolase (287 aa).

This sequence belongs to the KdsA family.

The protein resides in the cytoplasm. The catalysed reaction is D-arabinose 5-phosphate + phosphoenolpyruvate + H2O = 3-deoxy-alpha-D-manno-2-octulosonate-8-phosphate + phosphate. It functions in the pathway carbohydrate biosynthesis; 3-deoxy-D-manno-octulosonate biosynthesis; 3-deoxy-D-manno-octulosonate from D-ribulose 5-phosphate: step 2/3. Its pathway is bacterial outer membrane biogenesis; lipopolysaccharide biosynthesis. This Magnetococcus marinus (strain ATCC BAA-1437 / JCM 17883 / MC-1) protein is 2-dehydro-3-deoxyphosphooctonate aldolase.